The sequence spans 24 residues: Lantibiotic 107891 (24 aa).

Threonine 2 carries the post-translational modification (E)-2,3-didehydrobutyrine. The lanthionine (Ser-Cys) cross-link spans 3-7 (SWSLC). Tryptophan 4 carries the post-translational modification 6'-chlorotryptophan. Serine 5 carries the post-translational modification 2,3-didehydroalanine (Ser). The segment at residues 8 to 11 (TPGC) is a cross-link (beta-methyllanthionine (Thr-Cys)). Cross-links (lanthionine (Ser-Cys)) lie at residues 13–20 (SPGGGSNC) and 18–23 (SNCSFC). At proline 14 the chain carries 3,4-dihydroxyproline; in form A1. 4-hydroxyproline; in form A2 is present on proline 14. The segment at residues 21-24 (SFCC) is a cross-link (S-(2-aminovinyl)-D-cysteine (Ser-Cys)).

This sequence belongs to the type A lantibiotic family. Post-translationally, maturation of lantibiotics involves the enzymatic conversion of Thr, and Ser into dehydrated AA and the formation of thioether bonds with cysteine. The C-terminal lanthionine undergoes decarboxylation. This is followed by membrane translocation and cleavage of the modified precursor. In terms of processing, occurs in 2 forms, A1 contains 3,4-dihydroxyproline at Pro-14, A2 contains 4-hydroxyproline at Pro-14. The patent report does not provide the stereochemistry of the modified prolines. The patent report does not describe whether the 2,3-didehydrobutyrine is the E- or Z-isomer. In several diagrams it is shown as the E-isomer.

Lanthionine-containing peptide antibiotic (lantibiotic) active on Gram-positive bacteria. The bactericidal activity of lantibiotics is based on depolarization of energized bacterial cytoplasmic membranes, initiated by the formation of aqueous transmembrane pores. The polypeptide is Lantibiotic 107891 (Microbispora sp. (strain 107891)).